Reading from the N-terminus, the 570-residue chain is Alpha-glucosidase (570 aa).

Catalysis depends on Asp-206, which acts as the Nucleophile. Glu-263 serves as the catalytic Proton donor.

This sequence belongs to the glycosyl hydrolase 13 family.

It carries out the reaction Hydrolysis of terminal, non-reducing (1-&gt;4)-linked alpha-D-glucose residues with release of alpha-D-glucose.. This is Alpha-glucosidase (MAL2) from Candida albicans (Yeast).